Consider the following 206-residue polypeptide: Imidazoleglycerol-phosphate dehydratase (206 aa).

A disordered region spans residues 1–24 (MDPTASGRQAPRNPRQATVQRETK).

The protein belongs to the imidazoleglycerol-phosphate dehydratase family.

It localises to the cytoplasm. It catalyses the reaction D-erythro-1-(imidazol-4-yl)glycerol 3-phosphate = 3-(imidazol-4-yl)-2-oxopropyl phosphate + H2O. It functions in the pathway amino-acid biosynthesis; L-histidine biosynthesis; L-histidine from 5-phospho-alpha-D-ribose 1-diphosphate: step 6/9. The chain is Imidazoleglycerol-phosphate dehydratase from Acidothermus cellulolyticus (strain ATCC 43068 / DSM 8971 / 11B).